Consider the following 433-residue polypeptide: Trigger factor (433 aa).

In terms of domain architecture, PPIase FKBP-type spans 161 to 246 (GDRVTMDFVG…AKKVEARDLP (86 aa)).

It belongs to the FKBP-type PPIase family. Tig subfamily.

Its subcellular location is the cytoplasm. The enzyme catalyses [protein]-peptidylproline (omega=180) = [protein]-peptidylproline (omega=0). Involved in protein export. Acts as a chaperone by maintaining the newly synthesized protein in an open conformation. Functions as a peptidyl-prolyl cis-trans isomerase. The sequence is that of Trigger factor from Idiomarina loihiensis (strain ATCC BAA-735 / DSM 15497 / L2-TR).